A 382-amino-acid chain; its full sequence is Glutamyl-tRNA reductase (382 aa).

Substrate contacts are provided by residues 38-41, Ser85, 90-92, and Gln96; these read TCNR and ENQ. Cys39 functions as the Nucleophile in the catalytic mechanism. Residue 164-169 participates in NADP(+) binding; the sequence is GAGEMG.

It belongs to the glutamyl-tRNA reductase family. In terms of assembly, homodimer.

The catalysed reaction is (S)-4-amino-5-oxopentanoate + tRNA(Glu) + NADP(+) = L-glutamyl-tRNA(Glu) + NADPH + H(+). It participates in porphyrin-containing compound metabolism; protoporphyrin-IX biosynthesis; 5-aminolevulinate from L-glutamyl-tRNA(Glu): step 1/2. Its function is as follows. Catalyzes the NADPH-dependent reduction of glutamyl-tRNA(Glu) to glutamate 1-semialdehyde (GSA). This Methanococcus maripaludis (strain C6 / ATCC BAA-1332) protein is Glutamyl-tRNA reductase.